Consider the following 680-residue polypeptide: Galactose oxidase (680 aa).

The N-terminal stretch at 1–24 (MKHLLTLALCFSSINAVAVTVPHK) is a signal peptide. The propeptide occupies 25-41 (AVGTGIPEGSLQFLSLR). Residues 42 to 189 (ASAPIGSAIS…SIAEINVFQA (148 aa)) form the F5/8 type C domain. A disulfide bond links cysteine 59 and cysteine 68. 5 Kelch repeats span residues 223 to 268 (RVLM…HDMF), 279 to 321 (QIVV…TMSD), 323 to 372 (RVFT…LYRS), 436 to 490 (KILT…VLPD), and 492 to 544 (STFI…LLLP). Residues 269–313 (CPGISMDGNGQIVVTGGNDAKKTSLYDSSSDSWIPGPDMQVARGY) constitute a cross-link (3'-(S-cysteinyl)-tyrosine (Cys-Tyr)). Residue tyrosine 313 participates in Cu cation binding. The Cu cation site is built by tyrosine 536 and histidine 537. Tyrosine 536 serves as the catalytic Proton acceptor. Cysteine 556 and cysteine 559 are oxidised to a cystine. Histidine 622 serves as a coordination point for Cu cation.

In terms of assembly, monomer. It depends on Cu(2+) as a cofactor. Galactose oxidase contains a protein-derived free radical cofactor. In the active state, Tyr-313, which is cross-linked to Cys-269 via a thioether bond, is oxidized to a radical and acts with Cu(2+) as a two-electron acceptor in the oxidation reaction. The cross-link is believed to modulate the redox potential of the tyrosyl radical, which is further stabilized by a stacking interaction with Trp-331 in the active site. The post-translational formation of the cross-link is closely linked to the propeptide cleavage event, and both are copper-dependent, autocatalytic processes. The propeptide may act as an intramolecular chaperone, facilitating thioester bond formation and copper binding by positioning of active-site residues, including copper ligands.

Its subcellular location is the secreted. The catalysed reaction is D-galactose + O2 = D-galacto-hexodialdose + H2O2. Inhibited by diethyldithiocarbamate. Functionally, catalyzes the sterospecific oxidation of primary alcohols to the corresponding aldehydes. The biologically relevant substrate of the enzyme is not known as the enzyme exhibits broad substrate specificity from small alcohols through sugars to oligo- and polysaccharides. This Gibberella zeae (Wheat head blight fungus) protein is Galactose oxidase (GAOA).